The sequence spans 100 residues: DNA-directed RNA polymerase subunit Rpo11 (100 aa).

It belongs to the archaeal Rpo11/eukaryotic RPB11/RPC19 RNA polymerase subunit family. In terms of assembly, part of the RNA polymerase complex.

The protein localises to the cytoplasm. The enzyme catalyses RNA(n) + a ribonucleoside 5'-triphosphate = RNA(n+1) + diphosphate. Functionally, DNA-dependent RNA polymerase (RNAP) catalyzes the transcription of DNA into RNA using the four ribonucleoside triphosphates as substrates. This Picrophilus torridus (strain ATCC 700027 / DSM 9790 / JCM 10055 / NBRC 100828 / KAW 2/3) protein is DNA-directed RNA polymerase subunit Rpo11.